A 39-amino-acid polypeptide reads, in one-letter code: Omega-theraphotoxin-Bs1b (39 aa).

Intrachain disulfides connect C4-C25, C8-C31, and C17-C36.

This sequence belongs to the neurotoxin 12 (Hwtx-2) family. 06 (TXP1) subfamily. As to expression, expressed by the venom gland.

The protein resides in the secreted. Its function is as follows. Inhibits voltage-gated calcium channels (Cav) in rat cerebellar granule cells. Has insecticidal activity. The sequence is that of Omega-theraphotoxin-Bs1b from Brachypelma smithi (Mexican red knee tarantula).